The following is a 250-amino-acid chain: Hydroxyethylthiazole kinase (250 aa).

Met39 provides a ligand contact to substrate. Residues Arg114 and Thr159 each coordinate ATP. A substrate-binding site is contributed by Gly186.

It belongs to the Thz kinase family. Mg(2+) is required as a cofactor.

It catalyses the reaction 5-(2-hydroxyethyl)-4-methylthiazole + ATP = 4-methyl-5-(2-phosphooxyethyl)-thiazole + ADP + H(+). Its pathway is cofactor biosynthesis; thiamine diphosphate biosynthesis; 4-methyl-5-(2-phosphoethyl)-thiazole from 5-(2-hydroxyethyl)-4-methylthiazole: step 1/1. Catalyzes the phosphorylation of the hydroxyl group of 4-methyl-5-beta-hydroxyethylthiazole (THZ). The protein is Hydroxyethylthiazole kinase of Lactococcus lactis subsp. cremoris (strain MG1363).